A 412-amino-acid chain; its full sequence is FAD-dependent monooxygenase nscC (412 aa).

The signal sequence occupies residues 1–21 (MAKPQATVLIIGAGISGLTTS). FAD-binding residues include Glu-35 and Ala-46. N-linked (GlcNAc...) asparagine glycosylation is present at Asn-92. Arg-119 is an FAD binding site. N-linked (GlcNAc...) asparagine glycans are attached at residues Asn-170 and Asn-231. Positions 326 and 339 each coordinate FAD.

It belongs to the paxM FAD-dependent monooxygenase family. Requires FAD as cofactor.

Its pathway is secondary metabolite biosynthesis. Its function is as follows. FAD-dependent monooxygenase; part of the gene cluster that mediates the biosynthesis of neosartoricin B, a prenylated anthracenone that probably exhibits T-cell antiproliferative activity, suggestive of a physiological role as an immunosuppressive agent. The non-reducing polyketide synthase nscA probably synthesizes and cyclizes the decaketide backbone. The hydrolase nscB then mediates the product release through hydrolysis followed by spontaneous decarboxylation. The prenyltransferase nscD catalyzes the addition of the dimethylallyl group to the aromatic C5. The FAD-dependent monooxygenase nscC is then responsible for the stereospecific hydroxylation at C2. Neosartoricin B can be converted into two additional compounds neosartoricins C and D. Neosartoricin C is a spirocyclic compound that is cyclized through the attack of C3 hydroxyl on C14, followed by dehydration. On the other hand, neosartoricin D is a further cyclized compound in which attack of C2 on C14 in neosartoricin C results in the formation of the acetal-containing dioxabicyclo-octanone ring. Both of these compounds are novel and possibly represent related metabolites of the gene cluster. This chain is FAD-dependent monooxygenase nscC, found in Arthroderma otae (strain ATCC MYA-4605 / CBS 113480) (Microsporum canis).